Reading from the N-terminus, the 326-residue chain is NADH-quinone oxidoreductase subunit H (326 aa).

8 consecutive transmembrane segments (helical) span residues 11–31, 81–101, 114–134, 154–174, 186–206, 237–257, 265–285, and 302–322; these read ILLSILKAVVILLVVVSCGAF, VIFTLAPMIAFTSLLLAFAIV, IGILFFLMMAGLGVYAVLFAG, LSYEVFLGLSLMGVVAQAGSF, LWNVIPQFFGFITFAIAGVAV, FFVGEYIGIVTVSALIVTLFF, LPPFIWFALKTAFFMMMFILI, and WKVCLPLTLINLLVTAAVILW.

This sequence belongs to the complex I subunit 1 family. NDH-1 is composed of 13 different subunits. Subunits NuoA, H, J, K, L, M, N constitute the membrane sector of the complex.

The protein resides in the cell inner membrane. It carries out the reaction a quinone + NADH + 5 H(+)(in) = a quinol + NAD(+) + 4 H(+)(out). Its function is as follows. NDH-1 shuttles electrons from NADH, via FMN and iron-sulfur (Fe-S) centers, to quinones in the respiratory chain. The immediate electron acceptor for the enzyme in this species is believed to be ubiquinone. Couples the redox reaction to proton translocation (for every two electrons transferred, four hydrogen ions are translocated across the cytoplasmic membrane), and thus conserves the redox energy in a proton gradient. This subunit may bind ubiquinone. In Cronobacter sakazakii (strain ATCC BAA-894) (Enterobacter sakazakii), this protein is NADH-quinone oxidoreductase subunit H.